We begin with the raw amino-acid sequence, 208 residues long: Small ribosomal subunit protein uS4 (208 aa).

The region spanning 95–157 (RRIDNVVYRA…DSLKKLIRSN (63 aa)) is the S4 RNA-binding domain.

The protein belongs to the universal ribosomal protein uS4 family. Part of the 30S ribosomal subunit. Contacts protein S5. The interaction surface between S4 and S5 is involved in control of translational fidelity.

Functionally, one of the primary rRNA binding proteins, it binds directly to 16S rRNA where it nucleates assembly of the body of the 30S subunit. Its function is as follows. With S5 and S12 plays an important role in translational accuracy. The sequence is that of Small ribosomal subunit protein uS4 from Borreliella burgdorferi (strain ATCC 35210 / DSM 4680 / CIP 102532 / B31) (Borrelia burgdorferi).